Reading from the N-terminus, the 254-residue chain is Type III pantothenate kinase (254 aa).

6 to 13 (DVGNTNIV) serves as a coordination point for ATP. Position 107–110 (107–110 (GADR)) interacts with substrate. Asp109 functions as the Proton acceptor in the catalytic mechanism. Residue Asp129 participates in K(+) binding. Residue Thr132 coordinates ATP. Thr184 is a substrate binding site.

The protein belongs to the type III pantothenate kinase family. Homodimer. The cofactor is NH4(+). It depends on K(+) as a cofactor.

It localises to the cytoplasm. It carries out the reaction (R)-pantothenate + ATP = (R)-4'-phosphopantothenate + ADP + H(+). The protein operates within cofactor biosynthesis; coenzyme A biosynthesis; CoA from (R)-pantothenate: step 1/5. Its function is as follows. Catalyzes the phosphorylation of pantothenate (Pan), the first step in CoA biosynthesis. The sequence is that of Type III pantothenate kinase from Exiguobacterium sp. (strain ATCC BAA-1283 / AT1b).